We begin with the raw amino-acid sequence, 120 residues long: Ribonuclease P protein component (120 aa).

This sequence belongs to the RnpA family. As to quaternary structure, consists of a catalytic RNA component (M1 or rnpB) and a protein subunit.

It carries out the reaction Endonucleolytic cleavage of RNA, removing 5'-extranucleotides from tRNA precursor.. In terms of biological role, RNaseP catalyzes the removal of the 5'-leader sequence from pre-tRNA to produce the mature 5'-terminus. It can also cleave other RNA substrates such as 4.5S RNA. The protein component plays an auxiliary but essential role in vivo by binding to the 5'-leader sequence and broadening the substrate specificity of the ribozyme. In Pseudoalteromonas atlantica (strain T6c / ATCC BAA-1087), this protein is Ribonuclease P protein component.